Here is a 180-residue protein sequence, read N- to C-terminus: MIKREDVYKIGLFNKPHGIHGELSFTFTDDIFDRADCDYLICRLDDIFVPFFIEEYRFRSDSTALVKLEGVDTAERARMFTNVEVYFPVKHAEEAGPGELSWDFFVGFRVEDVRHGALGKVTDVDTSTVNTLFVVDRDGDELLIPAQEELIAGIDQKHKIITVDLPEGLLSLDECDDEES.

Residues 97–169 (PGELSWDFFV…IITVDLPEGL (73 aa)) enclose the PRC barrel domain.

Belongs to the RimM family. In terms of assembly, binds ribosomal protein uS19.

The protein resides in the cytoplasm. Functionally, an accessory protein needed during the final step in the assembly of 30S ribosomal subunit, possibly for assembly of the head region. Essential for efficient processing of 16S rRNA. May be needed both before and after RbfA during the maturation of 16S rRNA. It has affinity for free ribosomal 30S subunits but not for 70S ribosomes. The chain is Ribosome maturation factor RimM from Bacteroides fragilis (strain YCH46).